The following is a 314-amino-acid chain: 4-hydroxy-3-methylbut-2-enyl diphosphate reductase (314 aa).

A [4Fe-4S] cluster-binding site is contributed by C12. (2E)-4-hydroxy-3-methylbut-2-enyl diphosphate is bound by residues H41 and H74. Dimethylallyl diphosphate-binding residues include H41 and H74. Residues H41 and H74 each coordinate isopentenyl diphosphate. Residue C96 coordinates [4Fe-4S] cluster. H124 lines the (2E)-4-hydroxy-3-methylbut-2-enyl diphosphate pocket. H124 is a binding site for dimethylallyl diphosphate. H124 provides a ligand contact to isopentenyl diphosphate. E126 functions as the Proton donor in the catalytic mechanism. T168 is a binding site for (2E)-4-hydroxy-3-methylbut-2-enyl diphosphate. [4Fe-4S] cluster is bound at residue C198. (2E)-4-hydroxy-3-methylbut-2-enyl diphosphate is bound by residues S226, S227, N228, and S270. 4 residues coordinate dimethylallyl diphosphate: S226, S227, N228, and S270. Isopentenyl diphosphate-binding residues include S226, S227, N228, and S270.

It belongs to the IspH family. [4Fe-4S] cluster is required as a cofactor.

The enzyme catalyses isopentenyl diphosphate + 2 oxidized [2Fe-2S]-[ferredoxin] + H2O = (2E)-4-hydroxy-3-methylbut-2-enyl diphosphate + 2 reduced [2Fe-2S]-[ferredoxin] + 2 H(+). The catalysed reaction is dimethylallyl diphosphate + 2 oxidized [2Fe-2S]-[ferredoxin] + H2O = (2E)-4-hydroxy-3-methylbut-2-enyl diphosphate + 2 reduced [2Fe-2S]-[ferredoxin] + 2 H(+). The protein operates within isoprenoid biosynthesis; dimethylallyl diphosphate biosynthesis; dimethylallyl diphosphate from (2E)-4-hydroxy-3-methylbutenyl diphosphate: step 1/1. Its pathway is isoprenoid biosynthesis; isopentenyl diphosphate biosynthesis via DXP pathway; isopentenyl diphosphate from 1-deoxy-D-xylulose 5-phosphate: step 6/6. Functionally, catalyzes the conversion of 1-hydroxy-2-methyl-2-(E)-butenyl 4-diphosphate (HMBPP) into a mixture of isopentenyl diphosphate (IPP) and dimethylallyl diphosphate (DMAPP). Acts in the terminal step of the DOXP/MEP pathway for isoprenoid precursor biosynthesis. In Pseudomonas aeruginosa (strain LESB58), this protein is 4-hydroxy-3-methylbut-2-enyl diphosphate reductase.